Reading from the N-terminus, the 393-residue chain is Formate-dependent phosphoribosylglycinamide formyltransferase (393 aa).

N(1)-(5-phospho-beta-D-ribosyl)glycinamide contacts are provided by residues 22–23 (EL) and Glu82. ATP-binding positions include Arg114, Lys155, 160-165 (SSGHGQ), 195-198 (EGFV), and Glu203. In terms of domain architecture, ATP-grasp spans 119–308 (RLAAEELGLP…QFALHARAVL (190 aa)). Mg(2+) is bound by residues Glu267 and Glu279. N(1)-(5-phospho-beta-D-ribosyl)glycinamide-binding positions include Asp286, Lys356, and 363–364 (RR).

This sequence belongs to the PurK/PurT family. Homodimer.

The catalysed reaction is N(1)-(5-phospho-beta-D-ribosyl)glycinamide + formate + ATP = N(2)-formyl-N(1)-(5-phospho-beta-D-ribosyl)glycinamide + ADP + phosphate + H(+). The protein operates within purine metabolism; IMP biosynthesis via de novo pathway; N(2)-formyl-N(1)-(5-phospho-D-ribosyl)glycinamide from N(1)-(5-phospho-D-ribosyl)glycinamide (formate route): step 1/1. Involved in the de novo purine biosynthesis. Catalyzes the transfer of formate to 5-phospho-ribosyl-glycinamide (GAR), producing 5-phospho-ribosyl-N-formylglycinamide (FGAR). Formate is provided by PurU via hydrolysis of 10-formyl-tetrahydrofolate. In Parabacteroides distasonis (strain ATCC 8503 / DSM 20701 / CIP 104284 / JCM 5825 / NCTC 11152), this protein is Formate-dependent phosphoribosylglycinamide formyltransferase.